A 323-amino-acid polypeptide reads, in one-letter code: Methionyl-tRNA formyltransferase (323 aa).

Residue 121–124 (SLLP) coordinates (6S)-5,6,7,8-tetrahydrofolate.

The protein belongs to the Fmt family.

It catalyses the reaction L-methionyl-tRNA(fMet) + (6R)-10-formyltetrahydrofolate = N-formyl-L-methionyl-tRNA(fMet) + (6S)-5,6,7,8-tetrahydrofolate + H(+). Functionally, attaches a formyl group to the free amino group of methionyl-tRNA(fMet). The formyl group appears to play a dual role in the initiator identity of N-formylmethionyl-tRNA by promoting its recognition by IF2 and preventing the misappropriation of this tRNA by the elongation apparatus. This is Methionyl-tRNA formyltransferase from Desulfotalea psychrophila (strain LSv54 / DSM 12343).